A 127-amino-acid polypeptide reads, in one-letter code: Large ribosomal subunit protein uL24 (127 aa).

Belongs to the universal ribosomal protein uL24 family. Component of the large ribosomal subunit. Mature ribosomes consist of a small (40S) and a large (60S) subunit. The 40S subunit contains about 32 different proteins and 1 molecule of RNA (18S). The 60S subunit contains 45 different proteins and 3 molecules of RNA (25S, 5.8S and 5S).

It localises to the cytoplasm. In terms of biological role, component of the ribosome, a large ribonucleoprotein complex responsible for the synthesis of proteins in the cell. The small ribosomal subunit (SSU) binds messenger RNAs (mRNAs) and translates the encoded message by selecting cognate aminoacyl-transfer RNA (tRNA) molecules. The large subunit (LSU) contains the ribosomal catalytic site termed the peptidyl transferase center (PTC), which catalyzes the formation of peptide bonds, thereby polymerizing the amino acids delivered by tRNAs into a polypeptide chain. The nascent polypeptides leave the ribosome through a tunnel in the LSU and interact with protein factors that function in enzymatic processing, targeting, and the membrane insertion of nascent chains at the exit of the ribosomal tunnel. The sequence is that of Large ribosomal subunit protein uL24 from Candida albicans (strain SC5314 / ATCC MYA-2876) (Yeast).